The chain runs to 365 residues: Anhydro-N-acetylmuramic acid kinase (365 aa).

Position 12 to 19 (12 to 19 (GTSLDGID)) interacts with ATP.

Belongs to the anhydro-N-acetylmuramic acid kinase family.

It catalyses the reaction 1,6-anhydro-N-acetyl-beta-muramate + ATP + H2O = N-acetyl-D-muramate 6-phosphate + ADP + H(+). It participates in amino-sugar metabolism; 1,6-anhydro-N-acetylmuramate degradation. Its pathway is cell wall biogenesis; peptidoglycan recycling. Catalyzes the specific phosphorylation of 1,6-anhydro-N-acetylmuramic acid (anhMurNAc) with the simultaneous cleavage of the 1,6-anhydro ring, generating MurNAc-6-P. Is required for the utilization of anhMurNAc either imported from the medium or derived from its own cell wall murein, and thus plays a role in cell wall recycling. The polypeptide is Anhydro-N-acetylmuramic acid kinase (Rhizorhabdus wittichii (strain DSM 6014 / CCUG 31198 / JCM 15750 / NBRC 105917 / EY 4224 / RW1) (Sphingomonas wittichii)).